The chain runs to 512 residues: Glutathione-binding protein GsiB (512 aa).

Residues 1 to 26 form the signal peptide; it reads MTQFITHKWLAALGLASSIAAFPALA.

The protein belongs to the bacterial solute-binding protein 5 family. As to quaternary structure, the complex is composed of two ATP-binding proteins (GsiA), two transmembrane proteins (GsiC and GsiD) and a solute-binding protein (GsiB).

The protein resides in the periplasm. Its function is as follows. Part of the ABC transporter complex GsiABCD involved in glutathione import. Binds glutathione. The polypeptide is Glutathione-binding protein GsiB (Salmonella paratyphi A (strain ATCC 9150 / SARB42)).